The sequence spans 695 residues: Polyribonucleotide nucleotidyltransferase (695 aa).

Mg(2+)-binding residues include aspartate 486 and aspartate 492. Residues proline 553 to isoleucine 612 enclose the KH domain. The S1 motif domain maps to glycine 622 to lysine 690.

It belongs to the polyribonucleotide nucleotidyltransferase family. Mg(2+) is required as a cofactor.

It is found in the cytoplasm. It carries out the reaction RNA(n+1) + phosphate = RNA(n) + a ribonucleoside 5'-diphosphate. In terms of biological role, involved in mRNA degradation. Catalyzes the phosphorolysis of single-stranded polyribonucleotides processively in the 3'- to 5'-direction. The sequence is that of Polyribonucleotide nucleotidyltransferase from Chlamydia trachomatis serovar A (strain ATCC VR-571B / DSM 19440 / HAR-13).